The primary structure comprises 97 residues: Large ribosomal subunit protein uL23 (97 aa).

It belongs to the universal ribosomal protein uL23 family. In terms of assembly, part of the 50S ribosomal subunit. Contacts protein L29, and trigger factor when it is bound to the ribosome.

In terms of biological role, one of the early assembly proteins it binds 23S rRNA. One of the proteins that surrounds the polypeptide exit tunnel on the outside of the ribosome. Forms the main docking site for trigger factor binding to the ribosome. The sequence is that of Large ribosomal subunit protein uL23 from Acidithiobacillus ferrooxidans (strain ATCC 23270 / DSM 14882 / CIP 104768 / NCIMB 8455) (Ferrobacillus ferrooxidans (strain ATCC 23270)).